The primary structure comprises 129 residues: D-ribose pyranase (129 aa).

H20 acts as the Proton donor in catalysis. Substrate is bound by residues D28, H96, and 118–120 (YAN).

It belongs to the RbsD / FucU family. RbsD subfamily. As to quaternary structure, homodecamer.

The protein resides in the cytoplasm. The enzyme catalyses beta-D-ribopyranose = beta-D-ribofuranose. It participates in carbohydrate metabolism; D-ribose degradation; D-ribose 5-phosphate from beta-D-ribopyranose: step 1/2. Functionally, catalyzes the interconversion of beta-pyran and beta-furan forms of D-ribose. This Halalkalibacterium halodurans (strain ATCC BAA-125 / DSM 18197 / FERM 7344 / JCM 9153 / C-125) (Bacillus halodurans) protein is D-ribose pyranase.